Reading from the N-terminus, the 252-residue chain is Reaction center protein L chain (252 aa).

Helical transmembrane passes span 8–30 (FFGVTAAFFIMLGTALIIWGAAL), 58–86 (GGLWQIITVCAIGAFGSWALREVEISRKL), and 91–113 (HVPAAFSVAIFAYVTLEVIRPLL). The (7R,8Z)-bacteriochlorophyll b site is built by His128 and His148. The chain crosses the membrane as a helical span at residues 146-173 (PMHMVAVTLFFTTTLALALHGSLVLAAI). A Fe cation-binding site is contributed by His165. Phe191 contributes to the a ubiquinone binding site. The chain crosses the membrane as a helical span at residues 200–225 (GTLGIHRLGLFLALGAGFASATCILL). His205 is a binding site for Fe cation.

It belongs to the reaction center PufL/M/PsbA/D family. Reaction center is composed of four bacteriochlorophylls, two bacteriopheophytins, two ubiquinones, one iron, and two highly hydrophobic polypeptide chains (designated L and M).

The protein resides in the cell inner membrane. Functionally, the reaction center is a membrane-bound complex that mediates the initial photochemical event in the electron transfer process of photosynthesis. The protein is Reaction center protein L chain (pufL) of Acidiphilium cryptum.